We begin with the raw amino-acid sequence, 422 residues long: F-box/WD repeat-containing protein 2 (422 aa).

One can recognise an F-box domain in the interval 54–101 (RDFLKLLPLELSFYLLKWLDPQTLLTCCLVSKQWNKVISACTEVWQTA). WD repeat units lie at residues 146 to 183 (GHSA…CVYG), 185 to 221 (QTHT…RTQH), 224 to 265 (GHTG…NTLT), and 276 to 314 (LQKC…NCKC). N6-acetyllysine is present on K298.

In terms of assembly, directly interacts with SKP1 and CUL1. Widely expressed during embryogenesis and in adult tissues.

Its function is as follows. Substrate-recognition component of the SCF (SKP1-CUL1-F-box protein)-type E3 ubiquitin ligase complex. The sequence is that of F-box/WD repeat-containing protein 2 (Fbxw2) from Mus musculus (Mouse).